The primary structure comprises 207 residues: Octanoyltransferase (207 aa).

The 177-residue stretch at 27-203 (ADTEDELWVV…HLETQLTPKA (177 aa)) folds into the BPL/LPL catalytic domain. Substrate contacts are provided by residues 66–73 (RGGQITYH), 133–135 (SLG), and 146–148 (GLA). The active-site Acyl-thioester intermediate is Cys164.

The protein belongs to the LipB family.

It is found in the cytoplasm. The catalysed reaction is octanoyl-[ACP] + L-lysyl-[protein] = N(6)-octanoyl-L-lysyl-[protein] + holo-[ACP] + H(+). It functions in the pathway protein modification; protein lipoylation via endogenous pathway; protein N(6)-(lipoyl)lysine from octanoyl-[acyl-carrier-protein]: step 1/2. Catalyzes the transfer of endogenously produced octanoic acid from octanoyl-acyl-carrier-protein onto the lipoyl domains of lipoate-dependent enzymes. Lipoyl-ACP can also act as a substrate although octanoyl-ACP is likely to be the physiological substrate. In Neisseria gonorrhoeae (strain ATCC 700825 / FA 1090), this protein is Octanoyltransferase.